The following is a 207-amino-acid chain: LexA repressor (207 aa).

Positions 28–48 form a DNA-binding region, H-T-H motif; sequence VREIAVAVGLASSSTVHGHLE. Catalysis depends on for autocatalytic cleavage activity residues S129 and K167.

It belongs to the peptidase S24 family. Homodimer.

It carries out the reaction Hydrolysis of Ala-|-Gly bond in repressor LexA.. Its function is as follows. Represses a number of genes involved in the response to DNA damage (SOS response), including recA and lexA. In the presence of single-stranded DNA, RecA interacts with LexA causing an autocatalytic cleavage which disrupts the DNA-binding part of LexA, leading to derepression of the SOS regulon and eventually DNA repair. The protein is LexA repressor of Oceanobacillus iheyensis (strain DSM 14371 / CIP 107618 / JCM 11309 / KCTC 3954 / HTE831).